The following is a 440-amino-acid chain: D-serine dehydratase (440 aa).

Lys116 carries the N6-(pyridoxal phosphate)lysine modification.

The protein belongs to the serine/threonine dehydratase family. DsdA subfamily. As to quaternary structure, monomer. Pyridoxal 5'-phosphate serves as cofactor.

It carries out the reaction D-serine = pyruvate + NH4(+). In Salmonella typhimurium (strain LT2 / SGSC1412 / ATCC 700720), this protein is D-serine dehydratase.